The following is a 264-amino-acid chain: Thymidylate synthase (264 aa).

R21 contacts dUMP. Position 51 (H51) interacts with (6R)-5,10-methylene-5,6,7,8-tetrahydrofolate. 126-127 contributes to the dUMP binding site; the sequence is RR. C146 functions as the Nucleophile in the catalytic mechanism. Residues 166 to 169, N177, and 207 to 209 contribute to the dUMP site; these read RSAD and HIY. D169 serves as a coordination point for (6R)-5,10-methylene-5,6,7,8-tetrahydrofolate. Position 263 (A263) interacts with (6R)-5,10-methylene-5,6,7,8-tetrahydrofolate.

It belongs to the thymidylate synthase family. Bacterial-type ThyA subfamily. In terms of assembly, homodimer.

It localises to the cytoplasm. It carries out the reaction dUMP + (6R)-5,10-methylene-5,6,7,8-tetrahydrofolate = 7,8-dihydrofolate + dTMP. The protein operates within pyrimidine metabolism; dTTP biosynthesis. Its function is as follows. Catalyzes the reductive methylation of 2'-deoxyuridine-5'-monophosphate (dUMP) to 2'-deoxythymidine-5'-monophosphate (dTMP) while utilizing 5,10-methylenetetrahydrofolate (mTHF) as the methyl donor and reductant in the reaction, yielding dihydrofolate (DHF) as a by-product. This enzymatic reaction provides an intracellular de novo source of dTMP, an essential precursor for DNA biosynthesis. The polypeptide is Thymidylate synthase (Bacteroides thetaiotaomicron (strain ATCC 29148 / DSM 2079 / JCM 5827 / CCUG 10774 / NCTC 10582 / VPI-5482 / E50)).